The sequence spans 201 residues: Desiccation-related protein PCC3-06 (201 aa).

A compositionally biased stretch (polar residues) spans 41–54 (TVASQSQGRQQVSE). Disordered regions lie at residues 41–155 (TVAS…QNVK) and 177–201 (MGKS…TNYF). Basic and acidic residues-rich tracts occupy residues 57–76 (EDAK…KTSE), 108–144 (GELK…ERVA), and 177–193 (MGKS…ETKK).

Belongs to the LEA type 1 family.

This is Desiccation-related protein PCC3-06 from Craterostigma plantagineum (Blue gem).